A 244-amino-acid polypeptide reads, in one-letter code: GTP cyclohydrolase 1 type 2 homolog (244 aa).

A divalent metal cation contacts are provided by histidine 65, histidine 66, aspartate 102, histidine 216, and glutamate 220.

This sequence belongs to the GTP cyclohydrolase I type 2/NIF3 family. Homohexamer; trimer of dimers, that forms a hollow cage-like architecture.

DNA-binding protein exhibiting the ability to bind to both single-stranded and double-stranded DNA. The polypeptide is GTP cyclohydrolase 1 type 2 homolog (Methanocaldococcus jannaschii (strain ATCC 43067 / DSM 2661 / JAL-1 / JCM 10045 / NBRC 100440) (Methanococcus jannaschii)).